The chain runs to 521 residues: GMP synthase [glutamine-hydrolyzing] (521 aa).

Residues 5–197 (KILILDFGSQ…VLDICGAQPG (193 aa)) form the Glutamine amidotransferase type-1 domain. C81 acts as the Nucleophile in catalysis. Catalysis depends on residues H171 and E173. In terms of domain architecture, GMPS ATP-PPase spans 198 to 390 (WTMPNYIEEA…LGLPREMVYR (193 aa)). ATP is bound at residue 225–231 (SGGVDSS).

Homodimer.

It catalyses the reaction XMP + L-glutamine + ATP + H2O = GMP + L-glutamate + AMP + diphosphate + 2 H(+). The protein operates within purine metabolism; GMP biosynthesis; GMP from XMP (L-Gln route): step 1/1. Functionally, catalyzes the synthesis of GMP from XMP. This is GMP synthase [glutamine-hydrolyzing] (guaA) from Neisseria meningitidis serogroup A / serotype 4A (strain DSM 15465 / Z2491).